Here is a 209-residue protein sequence, read N- to C-terminus: Ubiquinone biosynthesis protein COQ4 homolog 2, mitochondrial (209 aa).

The Zn(2+) site is built by H118, D119, H122, and E134.

Belongs to the COQ4 family. Component of a multi-subunit COQ enzyme complex. Requires Zn(2+) as cofactor.

It is found in the mitochondrion inner membrane. The enzyme catalyses a 4-hydroxy-3-methoxy-5-(all-trans-polyprenyl)benzoate + H(+) = a 2-methoxy-6-(all-trans-polyprenyl)phenol + CO2. It participates in cofactor biosynthesis; ubiquinone biosynthesis. Its function is as follows. Lyase that catalyzes the C1-decarboxylation of 4-hydroxy-3-methoxy-5-(all-trans-polyprenyl)benzoic acid into 2-methoxy-6-(all-trans-polyprenyl)phenol during ubiquinone biosynthesis. The sequence is that of Ubiquinone biosynthesis protein COQ4 homolog 2, mitochondrial from Paramecium tetraurelia.